Here is a 458-residue protein sequence, read N- to C-terminus: tRNA modification GTPase MnmE (458 aa).

Residues R26, E88, and R127 each contribute to the (6S)-5-formyl-5,6,7,8-tetrahydrofolate site. The TrmE-type G domain maps to 224-378 (GLSTAIIGRP…IEERINDIFF (155 aa)). N234 contacts K(+). GTP contacts are provided by residues 234–239 (NVGKSS), 253–259 (TDIEGTT), and 278–281 (DTAG). S238 contacts Mg(2+). Residues T253, I255, and T258 each contribute to the K(+) site. Position 259 (T259) interacts with Mg(2+). Position 458 (K458) interacts with (6S)-5-formyl-5,6,7,8-tetrahydrofolate.

It belongs to the TRAFAC class TrmE-Era-EngA-EngB-Septin-like GTPase superfamily. TrmE GTPase family. Homodimer. Heterotetramer of two MnmE and two MnmG subunits. K(+) is required as a cofactor.

The protein resides in the cytoplasm. Exhibits a very high intrinsic GTPase hydrolysis rate. Involved in the addition of a carboxymethylaminomethyl (cmnm) group at the wobble position (U34) of certain tRNAs, forming tRNA-cmnm(5)s(2)U34. This chain is tRNA modification GTPase MnmE, found in Streptococcus agalactiae serotype III (strain NEM316).